Consider the following 487-residue polypeptide: Sensor protein CseC (487 aa).

A compositionally biased stretch (low complexity) spans 1-11 (MRGNLRRPGPA). The segment at 1–41 (MRGNLRRPGPAGTAGPGRTGIRTSADGGRARPRTGAGTGVR) is disordered. A run of 2 helical transmembrane segments spans residues 63-83 (ISAA…LVVH) and 185-205 (ALII…VLIG). The HAMP domain maps to 206–262 (GQLSRRLRKAAAAANQVAQGERDVRVRDAIGGVVRDETDDLARAVDAMADALQQRIE). Residues 270–472 (DIAHELRTPV…VAVLWLPEHA (203 aa)) enclose the Histidine kinase domain. The residue at position 273 (His-273) is a Phosphohistidine; by autocatalysis.

It localises to the cell membrane. It catalyses the reaction ATP + protein L-histidine = ADP + protein N-phospho-L-histidine.. The polypeptide is Sensor protein CseC (cseC) (Streptomyces avermitilis (strain ATCC 31267 / DSM 46492 / JCM 5070 / NBRC 14893 / NCIMB 12804 / NRRL 8165 / MA-4680)).